Reading from the N-terminus, the 578-residue chain is Arginine--tRNA ligase (578 aa).

Positions 123–133 (PNIAKEMHVGH) match the 'HIGH' region motif.

It belongs to the class-I aminoacyl-tRNA synthetase family. Monomer.

The protein resides in the cytoplasm. It catalyses the reaction tRNA(Arg) + L-arginine + ATP = L-arginyl-tRNA(Arg) + AMP + diphosphate. This Baumannia cicadellinicola subsp. Homalodisca coagulata protein is Arginine--tRNA ligase.